A 362-amino-acid polypeptide reads, in one-letter code: MKESLRLRLDQLCDRHEELTALLADAEVISDNKRFRKLSREHSDLNEIVDVWSKYRQAEEDIETAESMLSDPDFKDMAQEEIKENRALIEQLEGDLNILMIPKDPNDANAAYLEVRAGTGGDEAAIFSGDLFRMYSKYAESRGWRIEVLSENEGEHGGYKEVICRVDGDGVYGRLKFESGAHRVQRVPATESQGRVHTSACTVAILPEVDVDTTVEINPADLRIDTYRASGAGGQHINKTDSAVRITHVPTGVVVECQEERSQHKNKAKAMALLVSRLENAKRAAQETATSEMRRDLVGSGDRSERIRTYNYPQGRMTDHRINLTLYKLDAIMEGDLTELLDSLHREYQADQLAMLAQENGG.

Glutamine 235 is subject to N5-methylglutamine.

The protein belongs to the prokaryotic/mitochondrial release factor family. Post-translationally, methylated by PrmC. Methylation increases the termination efficiency of RF1.

The protein resides in the cytoplasm. Its function is as follows. Peptide chain release factor 1 directs the termination of translation in response to the peptide chain termination codons UAG and UAA. The chain is Peptide chain release factor 1 from Acinetobacter baylyi (strain ATCC 33305 / BD413 / ADP1).